The primary structure comprises 271 residues: Thiazole synthase (271 aa).

Residue K104 is the Schiff-base intermediate with DXP of the active site. 1-deoxy-D-xylulose 5-phosphate contacts are provided by residues G165, 192 to 193 (AG), and 214 to 215 (NT).

The protein belongs to the ThiG family. Homotetramer. Forms heterodimers with either ThiH or ThiS.

It is found in the cytoplasm. The catalysed reaction is [ThiS sulfur-carrier protein]-C-terminal-Gly-aminoethanethioate + 2-iminoacetate + 1-deoxy-D-xylulose 5-phosphate = [ThiS sulfur-carrier protein]-C-terminal Gly-Gly + 2-[(2R,5Z)-2-carboxy-4-methylthiazol-5(2H)-ylidene]ethyl phosphate + 2 H2O + H(+). It participates in cofactor biosynthesis; thiamine diphosphate biosynthesis. Functionally, catalyzes the rearrangement of 1-deoxy-D-xylulose 5-phosphate (DXP) to produce the thiazole phosphate moiety of thiamine. Sulfur is provided by the thiocarboxylate moiety of the carrier protein ThiS. In vitro, sulfur can be provided by H(2)S. This is Thiazole synthase from Burkholderia mallei (strain ATCC 23344).